The chain runs to 290 residues: uncharacterized protein (290 aa).

This is an uncharacterized protein from Lepidoptera (butterflies and moths).